The primary structure comprises 483 residues: SET domain and MYND-type zinc finger protein 6 (483 aa).

In terms of domain architecture, SET spans 4–228 (PLIASVILPE…KDEQLFISYI (225 aa)). Residues C49, C52, C62, C65, C71, C75, H83, and C87 each contribute to the Zn(2+) site. The MYND-type zinc-finger motif lies at 49–87 (CSTCTEEKVKTQRCAACKIIHYCSKGCQKADWPFHKLEC).

It belongs to the class V-like SAM-binding methyltransferase superfamily.

The protein localises to the cytoplasm. Its subcellular location is the nucleus. In Schizosaccharomyces pombe (strain 972 / ATCC 24843) (Fission yeast), this protein is SET domain and MYND-type zinc finger protein 6 (set6).